The primary structure comprises 131 residues: NADH dehydrogenase [ubiquinone] 1 alpha subcomplex subunit 6 (131 aa).

The protein belongs to the complex I LYR family. As to quaternary structure, mammalian complex I is composed of 45 different subunits.

It is found in the mitochondrion inner membrane. Functionally, accessory subunit of the mitochondrial membrane respiratory chain NADH dehydrogenase (Complex I), that is believed to be not involved in catalysis. Required for proper complex I assembly. Complex I functions in the transfer of electrons from NADH to the respiratory chain. The immediate electron acceptor for the enzyme is believed to be ubiquinone. In Mus musculus (Mouse), this protein is NADH dehydrogenase [ubiquinone] 1 alpha subcomplex subunit 6.